A 197-amino-acid chain; its full sequence is Endothelial cell-specific chemotaxis regulator (197 aa).

Residues 1–23 (MGSVRETQLRWAILGFLLLQAAS) form the signal peptide. Residues 24 to 113 (ETPSQFSTEA…PSPTSETVLT (90 aa)) lie on the Extracellular side of the membrane. Positions 40-107 (TVADHLPSSP…ADSTVPPSPT (68 aa)) are disordered. A compositionally biased stretch (polar residues) spans 50–63 (GPTWSQSQKHTSGL). Over residues 64 to 82 (SADVPSSGRSSDSMSGDTS) the composition is skewed to low complexity. Over residues 83-107 (HNVTSTSPNMSFRTTADSTVPPSPT) the composition is skewed to polar residues. Residues 114–134 (VAAFGVISFIAILVVVVIVLV) traverse the membrane as a helical segment. The Cytoplasmic portion of the chain corresponds to 135–197 (SVVSLRFKCR…KGCPSAEKVL (63 aa)). 2 disordered regions span residues 146–172 (NKESEDPQKPGSSGLSESGSTANGEKE) and 178–197 (SMKNINMNNSKGCPSAEKVL). Composition is skewed to polar residues over residues 155–168 (PGSSGLSESGSTAN) and 178–189 (SMKNINMNNSKG). A Phosphoserine modification is found at serine 187.

It belongs to the ECSCR family. In terms of assembly, interacts with FLNA. Interacts with the 20S proteasome subunit PSMA7. May be heavily O-glycosylated.

The protein resides in the cell membrane. Its subcellular location is the cytoplasm. Its function is as follows. Regulates endothelial chemotaxis and tube formation. Has a role in angiogenesis and apoptosis via modulation of the actin cytoskeleton and facilitation of proteasomal degradation of the apoptosis inhibitors BIRC3/IAP1 and BIRC2/IAP2. The polypeptide is Endothelial cell-specific chemotaxis regulator (ECSCR) (Bos taurus (Bovine)).